A 156-amino-acid polypeptide reads, in one-letter code: Transcription antitermination protein NusB (156 aa).

It belongs to the NusB family.

Involved in transcription antitermination. Required for transcription of ribosomal RNA (rRNA) genes. Binds specifically to the boxA antiterminator sequence of the ribosomal RNA (rrn) operons. This chain is Transcription antitermination protein NusB, found in Vibrio cholerae serotype O1 (strain ATCC 39541 / Classical Ogawa 395 / O395).